A 292-amino-acid polypeptide reads, in one-letter code: ATP synthase gamma chain (292 aa).

The protein belongs to the ATPase gamma chain family. As to quaternary structure, F-type ATPases have 2 components, CF(1) - the catalytic core - and CF(0) - the membrane proton channel. CF(1) has five subunits: alpha(3), beta(3), gamma(1), delta(1), epsilon(1). CF(0) has three main subunits: a, b and c.

It is found in the cell inner membrane. Its function is as follows. Produces ATP from ADP in the presence of a proton gradient across the membrane. The gamma chain is believed to be important in regulating ATPase activity and the flow of protons through the CF(0) complex. The protein is ATP synthase gamma chain of Magnetococcus marinus (strain ATCC BAA-1437 / JCM 17883 / MC-1).